The chain runs to 812 residues: Probable phosphoketolase (812 aa).

Belongs to the XFP family. Requires thiamine diphosphate as cofactor.

The protein is Probable phosphoketolase of Thermosynechococcus vestitus (strain NIES-2133 / IAM M-273 / BP-1).